Reading from the N-terminus, the 400-residue chain is Selection and upkeep of intraepithelial T-cells protein 2 (400 aa).

The first 21 residues, 1–21 (MGATGVLLCVVLHFLQMVTQS), serve as a signal peptide directing secretion. Residues 22–240 (SEKFTVTGLQ…LSGELFSWKR (219 aa)) lie on the Extracellular side of the membrane. Residues 23-133 (EKFTVTGLQR…VGEFYEEHIT (111 aa)) form the Ig-like V-type domain. 2 disulfides stabilise this stretch: cysteine 46–cysteine 120 and cysteine 160–cysteine 214. The Ig-like C1-type domain maps to 139–225 (ATSSVMYILM…LQNLLTHQEE (87 aa)). An N-linked (GlcNAc...) asparagine glycan is attached at asparagine 197. Residues 241 to 261 (VWIMILTTIGFMMIAFCMTYC) traverse the membrane as a helical segment. Residues 262-280 (VQQHLLYGTFSKGKCHWLK) are Cytoplasmic-facing. Residues 281–301 (STMIFMFSVIAVTGVMLILHL) traverse the membrane as a helical segment. The Extracellular portion of the chain corresponds to 302–321 (KQRVPVSDQHFELDTLWLED). The helical transmembrane segment at 322–342 (ISVILCVLIVFIIKLISFIYF) threads the bilayer. Residues 343–400 (RLEGDHQGWSLPPYLSATPTAAICRLAVPEYSRGHLQLDSEDDLAGMGPSPFFITPCF) lie on the Cytoplasmic side of the membrane.

Belongs to the SKINT family. In terms of tissue distribution, expressed in skin, thymus and mammary gland.

The protein resides in the membrane. Functionally, may act by engaging a cell surface molecule on immature T-cells in the embryonic thymus. This chain is Selection and upkeep of intraepithelial T-cells protein 2 (Skint2), found in Mus musculus (Mouse).